Reading from the N-terminus, the 308-residue chain is 4-hydroxy-3-methylbut-2-enyl diphosphate reductase (308 aa).

[4Fe-4S] cluster is bound at residue C12. 2 residues coordinate (2E)-4-hydroxy-3-methylbut-2-enyl diphosphate: H43 and H77. The dimethylallyl diphosphate site is built by H43 and H77. Isopentenyl diphosphate-binding residues include H43 and H77. C99 is a binding site for [4Fe-4S] cluster. H127 is a (2E)-4-hydroxy-3-methylbut-2-enyl diphosphate binding site. A dimethylallyl diphosphate-binding site is contributed by H127. H127 contributes to the isopentenyl diphosphate binding site. E129 functions as the Proton donor in the catalytic mechanism. A (2E)-4-hydroxy-3-methylbut-2-enyl diphosphate-binding site is contributed by T167. C197 is a binding site for [4Fe-4S] cluster. (2E)-4-hydroxy-3-methylbut-2-enyl diphosphate-binding residues include S225, S226, N227, and S269. The dimethylallyl diphosphate site is built by S225, S226, N227, and S269. Isopentenyl diphosphate contacts are provided by S225, S226, N227, and S269.

It belongs to the IspH family. The cofactor is [4Fe-4S] cluster.

It carries out the reaction isopentenyl diphosphate + 2 oxidized [2Fe-2S]-[ferredoxin] + H2O = (2E)-4-hydroxy-3-methylbut-2-enyl diphosphate + 2 reduced [2Fe-2S]-[ferredoxin] + 2 H(+). The catalysed reaction is dimethylallyl diphosphate + 2 oxidized [2Fe-2S]-[ferredoxin] + H2O = (2E)-4-hydroxy-3-methylbut-2-enyl diphosphate + 2 reduced [2Fe-2S]-[ferredoxin] + 2 H(+). It functions in the pathway isoprenoid biosynthesis; dimethylallyl diphosphate biosynthesis; dimethylallyl diphosphate from (2E)-4-hydroxy-3-methylbutenyl diphosphate: step 1/1. The protein operates within isoprenoid biosynthesis; isopentenyl diphosphate biosynthesis via DXP pathway; isopentenyl diphosphate from 1-deoxy-D-xylulose 5-phosphate: step 6/6. Its function is as follows. Catalyzes the conversion of 1-hydroxy-2-methyl-2-(E)-butenyl 4-diphosphate (HMBPP) into a mixture of isopentenyl diphosphate (IPP) and dimethylallyl diphosphate (DMAPP). Acts in the terminal step of the DOXP/MEP pathway for isoprenoid precursor biosynthesis. The polypeptide is 4-hydroxy-3-methylbut-2-enyl diphosphate reductase (Wolbachia pipientis subsp. Culex pipiens (strain wPip)).